An 809-amino-acid polypeptide reads, in one-letter code: Origin of replication complex subunit 1A (809 aa).

Residues 1-47 (MASSLSSKAKTFKSPTKTPTKMYRKSYLSPSSTSLTPPQTPETLTPL) are compositionally biased toward low complexity. Residues 1–69 (MASSLSSKAK…LGNDPIDLPG (69 aa)) are disordered. The segment at 160-185 (DPEIEDCQICFKSHTNTIMIECDDCL) is histone H3 binding. The segment at 163–213 (IEDCQICFKSHTNTIMIECDDCLGGFHLNCLKPPLKEVPEGDWICQFCEVK) adopts a PHD-type zinc-finger fold. Zn(2+) is bound by residues cysteine 166, cysteine 169, cysteine 181, cysteine 184, histidine 189, and cysteine 192. The tract at residues 201–205 (PEGDW) is histone H3 binding. The Zn(2+) site is built by cysteine 207 and cysteine 210. The region spanning 223–341 (PKPPEGKKLA…VHWGSFKRVA (119 aa)) is the BAH domain. The tract at residues 316 to 321 (ASNDGD) is histone H3 binding. The interval 431-799 (PKSLPCRSKE…DDVAFALKDN (369 aa)) is necessary and sufficient for ORC complex assembly. ATP contacts are provided by residues 466-473 (GVPGTGKT) and 466-474 (GVPGTGKTI). Mg(2+)-binding residues include aspartate 556 and glutamate 557. Residues glutamate 557, asparagine 590, and arginine 655 each coordinate ATP.

This sequence belongs to the ORC1 family. As to quaternary structure, component of the origin recognition complex (ORC) composed of at least ORC1 (ORC1A or ORC1B), ORC2, ORC3, ORC4, ORC5 and ORC6. ORC is regulated in a cell-cycle and development dependent manner. It is sequentially assembled at the exit from anaphase of mitosis and disassembled as cells enter S phase. Interacts directly with ORC2, ORC3, ORC4 and ORC5. Binds mostly unmodified histone H3, and, with lower efficiency, H3K4me1 H3K4me2 and H3K4me3. In terms of tissue distribution, follow a cell-cycle regulation with a peak at the G1/S-phase. Mostly expressed in siliques, flowers and flower buds, and, to a lower extent, in roots, leaves and stems.

The protein resides in the nucleus. Its function is as follows. Essential protein. Component of the origin recognition complex (ORC) that binds origins of replication. It has a role in both chromosomal replication and mating type transcriptional silencing. Binds to the ARS consensus sequence (ACS) of origins of replication. H3K4me3 effector that positively regulates the transcription of a subset of genes. This Arabidopsis thaliana (Mouse-ear cress) protein is Origin of replication complex subunit 1A.